Reading from the N-terminus, the 669-residue chain is Beta-galactosidase (669 aa).

Residues 1-24 (MDFPGAARLLSLLLVPLLLGPARG) form the signal peptide. Residues 25-29 (LRNAS) constitute a propeptide that is removed on maturation. N-linked (GlcNAc...) asparagine glycosylation is present at Asn27. Residues Tyr84, Glu130, and Asn188 each coordinate substrate. Glu189 serves as the catalytic Proton donor. A disulfide bond links Cys196 and Cys231. Asn248 carries N-linked (GlcNAc...) asparagine glycosylation. The Nucleophile role is filled by Glu269. Residue Tyr334 coordinates substrate. N-linked (GlcNAc...) asparagine glycans are attached at residues Asn465, Asn499, Asn547, and Asn557. Residues Cys628 and Cys636 are joined by a disulfide bond. Residues 649-669 (TPTSSHPLPDLSDRDSGWDRV) form a disordered region. Over residues 659 to 669 (LSDRDSGWDRV) the composition is skewed to basic and acidic residues.

It belongs to the glycosyl hydrolase 35 family. In terms of assembly, homodimer. May form higher multimers.

The protein resides in the lysosome. The enzyme catalyses Hydrolysis of terminal non-reducing beta-D-galactose residues in beta-D-galactosides.. In terms of biological role, cleaves beta-linked terminal galactosyl residues from gangliosides, glycoproteins, and glycosaminoglycans. This is Beta-galactosidase (GLB1) from Felis catus (Cat).